A 385-amino-acid chain; its full sequence is 8-amino-7-oxononanoate synthase (385 aa).

Arginine 21 provides a ligand contact to substrate. Position 108 to 109 (glycine 108 to phenylalanine 109) interacts with pyridoxal 5'-phosphate. Histidine 133 is a binding site for substrate. Pyridoxal 5'-phosphate-binding residues include serine 179, histidine 207, and threonine 233. Lysine 236 is subject to N6-(pyridoxal phosphate)lysine. Threonine 352 is a binding site for substrate.

This sequence belongs to the class-II pyridoxal-phosphate-dependent aminotransferase family. BioF subfamily. In terms of assembly, homodimer. The cofactor is pyridoxal 5'-phosphate.

It carries out the reaction 6-carboxyhexanoyl-[ACP] + L-alanine + H(+) = (8S)-8-amino-7-oxononanoate + holo-[ACP] + CO2. It participates in cofactor biosynthesis; biotin biosynthesis. Catalyzes the decarboxylative condensation of pimeloyl-[acyl-carrier protein] and L-alanine to produce 8-amino-7-oxononanoate (AON), [acyl-carrier protein], and carbon dioxide. This is 8-amino-7-oxononanoate synthase from Klebsiella pneumoniae subsp. pneumoniae (strain ATCC 700721 / MGH 78578).